Reading from the N-terminus, the 425-residue chain is NAD kinase 2, mitochondrial (425 aa).

A mitochondrion-targeting transit peptide spans Met-1–Ala-45. Residues Gln-20–Asp-46 form a disordered region. N6-acetyllysine; alternate is present on Lys-59. At Lys-59 the chain carries N6-succinyllysine; alternate. The residue at position 171 (Ser-171) is a Phosphoserine. Lys-285 is subject to N6-succinyllysine. Lys-300 carries the N6-acetyllysine; alternate modification. Lys-300 carries the post-translational modification N6-succinyllysine; alternate. Ser-350 is subject to Phosphoserine. Lys-380 is subject to N6-acetyllysine.

This sequence belongs to the NAD kinase family. As to quaternary structure, homodimer.

The protein resides in the mitochondrion. The enzyme catalyses NAD(+) + ATP = ADP + NADP(+) + H(+). With respect to regulation, inhibited by NADH, NADPH and NADP(+). Mitochondrial NAD(+) kinase that phosphorylates NAD(+) to yield NADP(+). Can use both ATP or inorganic polyphosphate as the phosphoryl donor. The chain is NAD kinase 2, mitochondrial (Nadk2) from Rattus norvegicus (Rat).